The sequence spans 161 residues: D-amino-acid N-acetyltransferase HPA3 (161 aa).

Position 2 is an N-acetylserine (S2). Residues 14–161 (IVVKAIEPKD…DKVLYKRNGY (148 aa)) enclose the N-acetyltransferase domain. 98-111 (LYVTERARVKGVGR) is an acetyl-CoA binding site.

It belongs to the acetyltransferase family. GNAT subfamily. Autoacetylates in an intermolecular reaction.

Its subcellular location is the cytoplasm. The protein localises to the nucleus. It catalyses the reaction a D-alpha-amino acid + acetyl-CoA = an N-acetyl-D-amino acid + CoA + H(+). N-acetyltransferase that acts on a wide range of D-amino acids. Catalyzes the N-acetylation through an ordered bi-bi mechanism, in which acetyl-CoA is the first substrate to be bound and CoA is the last product to be liberated. D-amino acids are toxic for the cell and their N-acetylation, preceding removal from cells, plays an important role in detoxification of D-amino acids. In vitro, capable of acetylating histone H4 at 'Lys-8' and polyamines like putrescine, spermidine and spermine. This chain is D-amino-acid N-acetyltransferase HPA3, found in Saccharomyces cerevisiae (strain ATCC 204508 / S288c) (Baker's yeast).